A 293-amino-acid chain; its full sequence is ATP synthase gamma chain (293 aa).

This sequence belongs to the ATPase gamma chain family. In terms of assembly, F-type ATPases have 2 components, CF(1) - the catalytic core - and CF(0) - the membrane proton channel. CF(1) has five subunits: alpha(3), beta(3), gamma(1), delta(1), epsilon(1). CF(0) has three main subunits: a, b and c.

It is found in the cell inner membrane. Its function is as follows. Produces ATP from ADP in the presence of a proton gradient across the membrane. The gamma chain is believed to be important in regulating ATPase activity and the flow of protons through the CF(0) complex. The chain is ATP synthase gamma chain from Psychrobacter arcticus (strain DSM 17307 / VKM B-2377 / 273-4).